The following is a 298-amino-acid chain: Tritrans,polycis-undecaprenyl-diphosphate synthase (geranylgeranyl-diphosphate specific) (298 aa).

The active site involves Asp35. Position 35 (Asp35) interacts with Mg(2+). Substrate-binding positions include 36–39 (GNRR), Arg48, His52, and 80–82 (STE). Asn83 functions as the Proton acceptor in the catalytic mechanism. Substrate contacts are provided by residues Phe84, Arg86, Arg208, and 214-216 (RIS).

This sequence belongs to the UPP synthase family. In terms of assembly, homodimer. Mg(2+) is required as a cofactor.

The catalysed reaction is geranylgeranyl diphosphate + 7 isopentenyl diphosphate = tri-trans,hepta-cis-undecaprenyl diphosphate + 7 diphosphate. In terms of biological role, catalyzes the sequential condensation of isopentenyl diphosphate (IPP) with geranylgeranyl diphosphate (GGPP) to yield (2Z,6Z,10Z,14Z,18Z,22Z,26Z,30E,34E,38E)-undecaprenyl diphosphate (tritrans,heptacis-UPP). It is probably the precursor of glycosyl carrier lipids. In Methanosarcina mazei (strain ATCC BAA-159 / DSM 3647 / Goe1 / Go1 / JCM 11833 / OCM 88) (Methanosarcina frisia), this protein is Tritrans,polycis-undecaprenyl-diphosphate synthase (geranylgeranyl-diphosphate specific).